The chain runs to 604 residues: Kelch-like protein 15 (604 aa).

The BTB domain occupies 31-98 (LDVTLLIEEH…MYYGSLELSM (68 aa)). One can recognise a BACK domain in the interval 133–237 (CAEVMRLLED…TPANIFEKVK (105 aa)). Kelch repeat units follow at residues 328–379 (FAFL…VIGK), 381–426 (IYAV…VLNG), 428–473 (LYIT…NKSK), 489–542 (KLYV…VLDK), and 544–592 (IMVL…SLHF).

The protein localises to the nucleus. Its pathway is protein modification; protein ubiquitination. Functionally, substrate-specific adapter for an E3 ubiquitin-protein ligase complex. The sequence is that of Kelch-like protein 15 (klhl15) from Danio rerio (Zebrafish).